Consider the following 284-residue polypeptide: Asialoglycoprotein receptor 1 (284 aa).

Residues 1 to 39 are Cytoplasmic-facing; it reads MTKDYQDFQHLDNENDHHQLQRGPPPAPRLLQRLCSGFR. Positions 5–8 match the Endocytosis signal motif; sequence YQDF. C35 carries S-palmitoyl cysteine lipidation. A helical; Signal-anchor for type II membrane protein transmembrane segment spans residues 40 to 60; sequence LFLLSLGLSILLLVVVCVITS. Residues 58 to 122 are a coiled coil; the sequence is ITSQNSQLRE…EDLREDHSRL (65 aa). Over 61-284 the chain is Extracellular; it reads QNSQLREDLR…VCETELGKAN (224 aa). N75, N78, and N146 each carry an N-linked (GlcNAc...) asparagine glycan. Disulfide bonds link C153-C164, C181-C276, and C254-C268. Positions 160 to 277 constitute a C-type lectin domain; that stretch reads YEGSCYWFSS…CRRPYRWVCE (118 aa). Ca(2+) contacts are provided by V190, E196, D215, Q239, D241, D242, E252, D253, N264, D265, and E277.

In terms of assembly, interacts with LASS2. In terms of processing, phosphorylated on a cytoplasmic Ser residue. In terms of tissue distribution, expressed exclusively in hepatic parenchymal cells.

It localises to the membrane. In terms of biological role, mediates the endocytosis of plasma glycoproteins to which the terminal sialic acid residue on their complex carbohydrate moieties has been removed. The receptor recognizes terminal galactose and N-acetylgalactosamine units. After ligand binding to the receptor, the resulting complex is internalized and transported to a sorting organelle, where receptor and ligand are disassociated. The receptor then returns to the cell membrane surface. In Rattus norvegicus (Rat), this protein is Asialoglycoprotein receptor 1 (Asgr1).